The sequence spans 202 residues: Alpha-latrotoxin-Lm1a (202 aa).

10 ANK repeats span residues 95–109 (LYNA…VGFK), 110–120 (LMESPEININE), 122–132 (NDWPVASTLLR), 133–138 (SSNVNV), 142–161 (NSDT…DINT), 163–170 (NGHLNIVK), 171–182 (YLVEEEDLSVDG), lysine 184, 185–191 (YGIDMTI), and 193–202 (TALDIATDLK). The segment at 175-181 (EEDLSVD) is 4C4.1 epitope.

The protein belongs to the cationic peptide 01 (latrotoxin) family. 03 (alpha-latrotoxin) subfamily. As to quaternary structure, homotetramer in membranes. In terms of processing, processed by furin-like proteases at both the N- and C-termini. Contains 1 disulfide bond. As to expression, expressed in venom gland, cephalothorax, and abdomen tissues from both males and females.

The protein localises to the secreted. The protein resides in the target cell membrane. Its function is as follows. Presynaptic neurotoxin that causes massive release of neurotransmitters from vertebrate (but not invertebrate) nerve terminals and endocrine cells via a complex mechanism involving activation of receptor(s) and toxin insertion into the plasma membrane with subsequent pore formation. Binds to neurexin-1-alpha (NRXN1) in a calcium dependent manner, adhesion G protein-coupled receptor L1 (ADGRL1, also termed latrophilin-1 and calcium-independent receptor of latrotoxin (CIRL)), and receptor-type tyrosine-protein phosphatase S (PTPRS), also termed PTP sigma. NRXN1 and PTPRS are suggested to provide a platform for binding and subsequent pore formation events. In contrast, binding to ADGRL1 does not involve oligomerization and channel formation, but direct downstream stimulation of the synaptic fusion machinery. This Latrodectus mactans (Black widow spider) protein is Alpha-latrotoxin-Lm1a.